Reading from the N-terminus, the 266-residue chain is ATP synthase subunit a (266 aa).

The next 5 membrane-spanning stretches (helical) occupy residues 28–48 (SINV…LVIF), 88–108 (LIAP…LMDL), 141–161 (DVNI…FYSI), 206–226 (LFGN…LLPW), and 237–257 (AIFH…LTVV).

This sequence belongs to the ATPase A chain family. In terms of assembly, F-type ATPases have 2 components, CF(1) - the catalytic core - and CF(0) - the membrane proton channel. CF(1) has five subunits: alpha(3), beta(3), gamma(1), delta(1), epsilon(1). CF(0) has three main subunits: a(1), b(2) and c(9-12). The alpha and beta chains form an alternating ring which encloses part of the gamma chain. CF(1) is attached to CF(0) by a central stalk formed by the gamma and epsilon chains, while a peripheral stalk is formed by the delta and b chains.

Its subcellular location is the cell inner membrane. Its function is as follows. Key component of the proton channel; it plays a direct role in the translocation of protons across the membrane. The polypeptide is ATP synthase subunit a (Pectobacterium carotovorum subsp. carotovorum (strain PC1)).